A 278-amino-acid chain; its full sequence is Large ribosomal subunit protein uL2 (278 aa).

The interval 222–264 is disordered; the sequence is GVAMNPIDHPHGGGEGRTSGGRHPVTPWGKPTKGRKTRKNKAT.

The protein belongs to the universal ribosomal protein uL2 family. Part of the 50S ribosomal subunit. Forms a bridge to the 30S subunit in the 70S ribosome.

In terms of biological role, one of the primary rRNA binding proteins. Required for association of the 30S and 50S subunits to form the 70S ribosome, for tRNA binding and peptide bond formation. It has been suggested to have peptidyltransferase activity; this is somewhat controversial. Makes several contacts with the 16S rRNA in the 70S ribosome. This is Large ribosomal subunit protein uL2 from Phenylobacterium zucineum (strain HLK1).